An 88-amino-acid chain; its full sequence is Cell division topological specificity factor (88 aa).

Belongs to the MinE family.

In terms of biological role, prevents the cell division inhibition by proteins MinC and MinD at internal division sites while permitting inhibition at polar sites. This ensures cell division at the proper site by restricting the formation of a division septum at the midpoint of the long axis of the cell. The sequence is that of Cell division topological specificity factor from Methylibium petroleiphilum (strain ATCC BAA-1232 / LMG 22953 / PM1).